A 601-amino-acid chain; its full sequence is Elongation factor 4 (601 aa).

The 183-residue stretch at 6–188 (KNIRNFSIIA…QIIKKIPAPD (183 aa)) folds into the tr-type G domain. Residues 18-23 (DHGKST) and 135-138 (NKID) each bind GTP.

It belongs to the TRAFAC class translation factor GTPase superfamily. Classic translation factor GTPase family. LepA subfamily.

The protein localises to the cell membrane. The enzyme catalyses GTP + H2O = GDP + phosphate + H(+). Functionally, required for accurate and efficient protein synthesis under certain stress conditions. May act as a fidelity factor of the translation reaction, by catalyzing a one-codon backward translocation of tRNAs on improperly translocated ribosomes. Back-translocation proceeds from a post-translocation (POST) complex to a pre-translocation (PRE) complex, thus giving elongation factor G a second chance to translocate the tRNAs correctly. Binds to ribosomes in a GTP-dependent manner. The chain is Elongation factor 4 from Buchnera aphidicola subsp. Schizaphis graminum (strain Sg).